The sequence spans 172 residues: MSSSGGAPGASASSAPPAQEEGMTWWYRWLCRLSGVLGAVSCAISGLFNCITIHPLNIAAGVWMIMNAFILLLCEAPFCCQFIEFANTVAEKVDRLRSWQKAVFYCGMAVVPIVISLTLTTLLGNAIAFATGVLYGLSALGKKGDAISYARIQQQRQQADEEKLAETLEGEL.

Topologically, residues 1-32 are cytoplasmic; that stretch reads MSSSGGAPGASASSAPPAQEEGMTWWYRWLCR. A helical transmembrane segment spans residues 33 to 53; it reads LSGVLGAVSCAISGLFNCITI. The Extracellular segment spans residues 54–57; that stretch reads HPLN. Residues 58 to 78 form a helical membrane-spanning segment; it reads IAAGVWMIMNAFILLLCEAPF. At 79-102 the chain is on the cytoplasmic side; sequence CCQFIEFANTVAEKVDRLRSWQKA. A helical transmembrane segment spans residues 103–123; the sequence is VFYCGMAVVPIVISLTLTTLL. Over 124-125 the chain is Extracellular; sequence GN. A helical transmembrane segment spans residues 126-142; it reads AIAFATGVLYGLSALGK. The Cytoplasmic segment spans residues 143–172; sequence KGDAISYARIQQQRQQADEEKLAETLEGEL.

Belongs to the calcium channel flower family. Interacts with adaptor protein complex 2 (AP-2). In terms of tissue distribution, detected in skin cells at low levels of expression (at protein level).

The protein resides in the cell membrane. It localises to the cytoplasmic vesicle. It is found in the secretory vesicle. The protein localises to the synaptic vesicle. Its subcellular location is the golgi apparatus. The protein resides in the vesicle. It localises to the early endosome. It is found in the recycling endosome. The protein localises to the endoplasmic reticulum membrane. Transmembrane protein which mediates synaptic endocytosis and fitness-based cell culling. In response to different stimulus strengths, controls two major modes of synaptic vesicle (SV) retrieval in hippocampal neurons; Clathrin-mediated endocytosis (CME) in response to mild stimulation and activity-dependent bulk endocytosis (ADBE) in response to strong stimulation. In cytotoxic T-lymphoocytes (CTLs) facilitates calcium-dependent endocytosis of cytotoxic granules at the immuno synapse. Different isoforms work as fitness fingerprints in 'loser' and 'winner' cells and thereby mediate win/lose decisions as part of the cell competition process. In terms of biological role, functions with the other flower isoforms to produce tissue-specific fitness fingerprints that identify unfit or fit cells during cell selection processes in order to maintain tissue health. During cell competition, if levels of this isoform in cells is higher than in the surrounding neighboring cells, the cells are recognized as 'winner' cells, and do not undergo elimination via apoptosis. Functionally, functions with the other flower isoforms to produce tissue-specific fitness fingerprints that identify unfit or fit cells during cell selection processes in order to maintain tissue health. During cell competition, if levels of this isoform in unfit cells is higher than in the surrounding neighboring cells, the cells are recognized as 'loser' cells, and undergo elimination via apoptosis to be replaced by the surrounding healthy 'winner' cell population. The chain is Calcium channel flower homolog (CACFD1) from Homo sapiens (Human).